We begin with the raw amino-acid sequence, 196 residues long: uncharacterized protein (196 aa).

In terms of domain architecture, HD spans 51 to 164 (VAEHSLLVEE…DRIFGKPDPV (114 aa)).

This is an uncharacterized protein from Rhodobacter capsulatus (strain ATCC BAA-309 / NBRC 16581 / SB1003).